The sequence spans 702 residues: Putative endo-beta-N-acetylglucosaminidase (702 aa).

Positions 1–23 (MKKVRFIFLALLFFLASPEGAMA) are cleaved as a signal peptide. Cell wall-binding repeat units lie at residues 42-63 (ANEW…DANY), 65-84 (ENEW…GGYM), 86-105 (KSEW…DGKM), 124-145 (IEDW…DGQH), 147-166 (EKEW…GGYL), 185-206 (QQGW…NGNY), 208-227 (DKEW…GGYM), 229-248 (ANEW…DGKI), 250-271 (EKEW…GGYM), 273-292 (ANEW…DGKM), 294-315 (EKEW…GGYM), 317-336 (ANEW…DGKI), 338-359 (EKEW…GGYM), 361-380 (ANEW…DGKM), and 382-403 (EKEW…GGYM).

Belongs to the glycosyl hydrolase 73 family.

It localises to the secreted. The catalysed reaction is an N(4)-(oligosaccharide-(1-&gt;3)-[oligosaccharide-(1-&gt;6)]-beta-D-Man-(1-&gt;4)-beta-D-GlcNAc-(1-&gt;4)-alpha-D-GlcNAc)-L-asparaginyl-[protein] + H2O = an oligosaccharide-(1-&gt;3)-[oligosaccharide-(1-&gt;6)]-beta-D-Man-(1-&gt;4)-D-GlcNAc + N(4)-(N-acetyl-beta-D-glucosaminyl)-L-asparaginyl-[protein]. Functionally, plays an important role in cell wall degradation and cell separation. The sequence is that of Putative endo-beta-N-acetylglucosaminidase (lytB) from Streptococcus pneumoniae (strain ATCC BAA-255 / R6).